The primary structure comprises 651 residues: Protein numb homolog (651 aa).

A PID domain is found at 33–193 (RTGKCSFPVK…ASRTTFTREG (161 aa)). Position 102 is a phosphothreonine; by AAK1 (Thr-102). Ser-194 is subject to Phosphoserine. Positions 228–255 (SSVAPGNTAPSPSSPTSPTSDATTSLEM) are disordered. Over residues 235–252 (TAPSPSSPTSPTSDATTS) the composition is skewed to low complexity. Thr-243 is modified (phosphothreonine). At Ser-244 the chain carries Phosphoserine. 2 positions are modified to phosphoserine; by CaMK1: Ser-276 and Ser-295. 2 disordered regions span residues 419 to 483 (QSSG…SPFQ) and 623 to 651 (LENKSKQRTNPSPTNPFSSDLQKTFEIEL). Ser-425 is modified (phosphoserine). Thr-436 is modified (phosphothreonine). Over residues 436–449 (TPSEADRWLEEVSK) the composition is skewed to basic and acidic residues. Position 438 is a phosphoserine (Ser-438). Residues 453-466 (AQQPQASAAPLQPV) are compositionally biased toward low complexity. A compositionally biased stretch (polar residues) spans 630–644 (RTNPSPTNPFSSDLQ). Phosphoserine is present on Ser-634.

Interacts with SIAH1. Interacts with LNX. Interacts with CDH1. Interacts with TFAP2A and TFAP2B. Interacts with RALBP1 in a complex also containing EPN1 and TFAP2A during interphase and mitosis. Interacts with AAK1. May interact with DUOXA1. Post-translationally, phosphorylated on Ser-276 and Ser-295 by CaMK1. In terms of processing, isoform 1 and isoform 2 are ubiquitinated by LNX leading to their subsequent proteasomal degradation. Ubiquitinated; mediated by SIAH1 and leading to its subsequent proteasomal degradation.

Its subcellular location is the cell membrane. The protein resides in the endosome membrane. Its function is as follows. Regulates clathrin-mediated receptor endocytosis. Plays a role in the process of neurogenesis. Required throughout embryonic neurogenesis to maintain neural progenitor cells, also called radial glial cells (RGCs), by allowing their daughter cells to choose progenitor over neuronal cell fate. Not required for the proliferation of neural progenitor cells before the onset of neurogenesis. Also involved postnatally in the subventricular zone (SVZ) neurogenesis by regulating SVZ neuroblasts survival and ependymal wall integrity. May also mediate local repair of brain ventricular wall damage. The sequence is that of Protein numb homolog from Homo sapiens (Human).